A 325-amino-acid polypeptide reads, in one-letter code: Beta-ketoacyl-[acyl-carrier-protein] synthase III (325 aa).

Catalysis depends on residues cysteine 119 and histidine 252. The segment at 253–257 (QANIR) is ACP-binding. Asparagine 282 is an active-site residue.

The protein belongs to the thiolase-like superfamily. FabH family. Homodimer.

It is found in the cytoplasm. The enzyme catalyses malonyl-[ACP] + acetyl-CoA + H(+) = 3-oxobutanoyl-[ACP] + CO2 + CoA. The protein operates within lipid metabolism; fatty acid biosynthesis. Functionally, catalyzes the condensation reaction of fatty acid synthesis by the addition to an acyl acceptor of two carbons from malonyl-ACP. Catalyzes the first condensation reaction which initiates fatty acid synthesis and may therefore play a role in governing the total rate of fatty acid production. Possesses both acetoacetyl-ACP synthase and acetyl transacylase activities. Its substrate specificity determines the biosynthesis of branched-chain and/or straight-chain of fatty acids. This chain is Beta-ketoacyl-[acyl-carrier-protein] synthase III, found in Delftia acidovorans (strain DSM 14801 / SPH-1).